Here is a 593-residue protein sequence, read N- to C-terminus: A-type ATP synthase subunit A (593 aa).

236 to 243 (GPFGSGKT) lines the ATP pocket.

Belongs to the ATPase alpha/beta chains family. Has multiple subunits with at least A(3), B(3), C, D, E, F, H, I and proteolipid K(x).

It localises to the cell membrane. The catalysed reaction is ATP + H2O + 4 H(+)(in) = ADP + phosphate + 5 H(+)(out). Component of the A-type ATP synthase that produces ATP from ADP in the presence of a proton gradient across the membrane. The A chain is the catalytic subunit. This is A-type ATP synthase subunit A from Pyrobaculum islandicum (strain DSM 4184 / JCM 9189 / GEO3).